The primary structure comprises 136 residues: Small ribosomal subunit protein uS8 (136 aa).

The protein belongs to the universal ribosomal protein uS8 family. As to quaternary structure, part of the 30S ribosomal subunit. Contacts proteins S5 and S12.

In terms of biological role, one of the primary rRNA binding proteins, it binds directly to 16S rRNA central domain where it helps coordinate assembly of the platform of the 30S subunit. The chain is Small ribosomal subunit protein uS8 from Frankia alni (strain DSM 45986 / CECT 9034 / ACN14a).